Consider the following 525-residue polypeptide: Keratin, type II cytoskeletal 4 (525 aa).

The interval 1 to 145 is head; the sequence is MIARQSSVRG…DPEIQKIRTA (145 aa). Omega-N-methylarginine is present on Arg13. Residues 146–181 form a coil 1A region; the sequence is EREQIKTLNNKFASFIDKVRFLEQQNKVLETKWNLL. An IF rod domain is found at 146 to 459; that stretch reads EREQIKTLNN…KLLEGEECRM (314 aa). Residues 182–200 are linker 1; that stretch reads QQQTTTTSPKSLDPFFETY. A coil 1B region spans residues 201–292; it reads INALRKNLDT…VLYEAELAQM (92 aa). Positions 293-316 are linker 12; the sequence is QTHVSDTSVVLSMDNNRNLDLDGI. The tract at residues 317–455 is coil 2; sequence IAEVRAQYED…ATYRKLLEGE (139 aa). The tract at residues 456-524 is tail; that stretch reads ECRMSGECKS…SSATITKRSP (69 aa).

The protein belongs to the intermediate filament family. As to quaternary structure, heterotetramer of two type I and two type II keratins. Keratin-4 is generally associated with keratin-13. As to expression, expressed in the dorsal and ventral epithelium of the tongue. Highest expression levels are detected in the suprabasal layer with low levels detected in the basal cell layer. Within the suprabasal layer expression is highest in the spinous cells, decreases in the granular cells and is not detected in the stratum corneum.

The sequence is that of Keratin, type II cytoskeletal 4 (Krt4) from Mus musculus (Mouse).